A 102-amino-acid polypeptide reads, in one-letter code: uncharacterized protein (102 aa).

This is an uncharacterized protein from Sulfolobus islandicus rod-shaped virus 1 (SIRV-1).